The primary structure comprises 493 residues: Transcript termination protein OPG145 (493 aa).

In terms of domain architecture, Helicase ATP-binding spans 100 to 256 (MIESKRPLYI…NSIINIAKLS (157 aa)). Residue 113 to 120 (LACGFGKT) participates in ATP binding. The DESH box motif lies at 206-209 (DESH). In terms of domain architecture, Helicase C-terminal spans 309 to 456 (ILDTLVEEFK…IISLSVDKLG (148 aa)).

The protein belongs to the helicase family. Poxviruses subfamily. As to quaternary structure, interacts with OPG087. Might be part of a transcription complex composed at least of OPG087, OPG110, and OPG145.

The protein localises to the virion. Functionally, DNA helicase which seems to act as a postreplicative transcription termination factor. Involved in ATP-dependent release of nascent RNA. Forms a stable complex with single-stranded DNA, and to a lesser extent RNA. This is Transcript termination protein OPG145 (OPG145) from Homo sapiens (Human).